Consider the following 752-residue polypeptide: Glutamate carboxypeptidase 2 (752 aa).

At 1–19 (MWNAQQDSDSAEALGRRQR) the chain is on the cytoplasmic side. Ser10 is subject to Phosphoserine. Residues 20-44 (WFCAGTLVLAFTGTFIIGFLFGWFI) form a helical; Signal-anchor for type II membrane protein membrane-spanning segment. Over 45 to 752 (KPSNDSTSSV…AAAETLREVD (708 aa)) the chain is Extracellular. N-linked (GlcNAc...) asparagine glycosylation is found at Asn48, Asn78, Asn123, Asn155, and Asn197. Positions 212 and 259 each coordinate substrate. Residues Thr271 and Tyr274 each coordinate Ca(2+). Positions 276-589 (ANEYAYRHEF…QVRGAMVFEL (314 aa)) are NAALADase. An N-linked (GlcNAc...) asparagine glycan is attached at Asn338. Zn(2+)-binding residues include His379 and Asp389. Glu426 contacts substrate. Glu426 acts as the Nucleophile; for NAALADase activity in catalysis. Glu427 serves as a coordination point for Zn(2+). Ca(2+)-binding residues include Glu435 and Glu438. Residue Asp455 participates in Zn(2+) binding. 2 N-linked (GlcNAc...) asparagine glycosylation sites follow: Asn461 and Asn478. Substrate is bound by residues 519-520 (SG), Asn521, 536-538 (RAR), Tyr554, and 554-555 (YH). Residue His555 participates in Zn(2+) binding. Asn615 carries N-linked (GlcNAc...) asparagine glycosylation. Ser630 acts as the Charge relay system in catalysis. Asn640 carries N-linked (GlcNAc...) asparagine glycosylation. Active-site charge relay system residues include Asp668 and His691. 701–702 (KY) is a substrate binding site.

This sequence belongs to the peptidase M28 family. M28B subfamily. Homodimer. Zn(2+) serves as cofactor. In terms of tissue distribution, widely expressed throughout brain regions with highest levels in the hippocampus, dentate gyrus, priform cortex, choroid plexus of ventricles, pineal gland, anterior lobe of the pituitary gland and supraoptic nucleus. High levels also found in the cerebral cortex, substantia nigra, pontine nucleus and the granule cell layer of cerebellum. Highly expressed in astrocytes and non-myelinating Schwann cells. Also expressed in kidney, localizing to the proximal brush border of the renal tube.

Its subcellular location is the cell membrane. The catalysed reaction is Release of an unsubstituted, C-terminal glutamyl residue, typically from Ac-Asp-Glu or folylpoly-gamma-glutamates.. The NAALADase activity is inhibited by beta-NAAG, quisqualic acid and 2-(phosphonomethyl)glutaric acid (PMG). Its function is as follows. Has both folate hydrolase and N-acetylated-alpha-linked-acidic dipeptidase (NAALADase) activity. Has a preference for tri-alpha-glutamate peptides. In the intestine, required for the uptake of folate. In the brain, modulates excitatory neurotransmission through the hydrolysis of the neuropeptide, N-aceylaspartylglutamate (NAAG), thereby releasing glutamate. Also exhibits a dipeptidyl-peptidase IV type activity. In vitro, cleaves Gly-Pro-AMC. The protein is Glutamate carboxypeptidase 2 (Folh1) of Rattus norvegicus (Rat).